A 338-amino-acid polypeptide reads, in one-letter code: Holliday junction branch migration complex subunit RuvB (338 aa).

The large ATPase domain (RuvB-L) stretch occupies residues 4–185; sequence EDQKILDAKP…FGIVAHMQFY (182 aa). Residues Leu24, Arg25, Gly66, Lys69, Thr70, Thr71, 132–134, Arg175, Tyr185, and Arg222 contribute to the ATP site; that span reads EDF. Thr70 is a Mg(2+) binding site. The small ATPAse domain (RuvB-S) stretch occupies residues 186–256; that stretch reads PVSDLKLIAK…IVDNALNKLH (71 aa). Residues 259–338 are head domain (RuvB-H); the sequence is ARGLDETDLK…LQIPYQTGLS (80 aa). Positions 314 and 319 each coordinate DNA.

The protein belongs to the RuvB family. As to quaternary structure, homohexamer. Forms an RuvA(8)-RuvB(12)-Holliday junction (HJ) complex. HJ DNA is sandwiched between 2 RuvA tetramers; dsDNA enters through RuvA and exits via RuvB. An RuvB hexamer assembles on each DNA strand where it exits the tetramer. Each RuvB hexamer is contacted by two RuvA subunits (via domain III) on 2 adjacent RuvB subunits; this complex drives branch migration. In the full resolvosome a probable DNA-RuvA(4)-RuvB(12)-RuvC(2) complex forms which resolves the HJ.

The protein resides in the cytoplasm. It catalyses the reaction ATP + H2O = ADP + phosphate + H(+). Its function is as follows. The RuvA-RuvB-RuvC complex processes Holliday junction (HJ) DNA during genetic recombination and DNA repair, while the RuvA-RuvB complex plays an important role in the rescue of blocked DNA replication forks via replication fork reversal (RFR). RuvA specifically binds to HJ cruciform DNA, conferring on it an open structure. The RuvB hexamer acts as an ATP-dependent pump, pulling dsDNA into and through the RuvAB complex. RuvB forms 2 homohexamers on either side of HJ DNA bound by 1 or 2 RuvA tetramers; 4 subunits per hexamer contact DNA at a time. Coordinated motions by a converter formed by DNA-disengaged RuvB subunits stimulates ATP hydrolysis and nucleotide exchange. Immobilization of the converter enables RuvB to convert the ATP-contained energy into a lever motion, pulling 2 nucleotides of DNA out of the RuvA tetramer per ATP hydrolyzed, thus driving DNA branch migration. The RuvB motors rotate together with the DNA substrate, which together with the progressing nucleotide cycle form the mechanistic basis for DNA recombination by continuous HJ branch migration. Branch migration allows RuvC to scan DNA until it finds its consensus sequence, where it cleaves and resolves cruciform DNA. The chain is Holliday junction branch migration complex subunit RuvB from Oenococcus oeni (strain ATCC BAA-331 / PSU-1).